The sequence spans 331 residues: Major ferric iron-binding protein (331 aa).

A signal peptide spans 1 to 22; it reads MKTSIRYALLAAALTAATPALA. Fe cation is bound by residues His-31, Glu-79, Tyr-217, and Tyr-218.

Belongs to the bacterial solute-binding protein 1 family.

The protein localises to the periplasm. Its function is as follows. This protein may be a central component in the iron-acquisition system. This Neisseria meningitidis serogroup B (strain ATCC BAA-335 / MC58) protein is Major ferric iron-binding protein (fbpA).